A 441-amino-acid chain; its full sequence is MEISSHQSHLLQQLNEQRRQDVFCDCSILVEGKVFKAHRNVLFASSGYFKMLLSQNSKETSQPTTATFQAFSPDTFTVILDFVYSGKLSLTGQNVIEVMSAASFLQMTDVISVCKTFIKSSLDISEKEKDRYFSLSDKDANSNGIERSSFYSSGWQDESSSPRSHLSPDQGTGIISGKSWSKYNYHPASQRNTQQPLTKHEQRKDSIKKAKHLRLSQPSEMTHYKSSKREARTSDSSSHASQSEEQAQMNAEMDSTPVSYQYGQGSDVTSRSFPDDLPRMRFKCPYCTHVVKRKADLKRHLRCHTGERPYPCQACGKRFSRLDHLSSHFRTIHQACKLICRKCKRHVTGLTGQVVQEGTRRYRLCNECLAEVGIDSLPIDLEAEQHLMSPSDGDKDSRWHMGEDENRSYVEIVEDGSADLVIQQVDDSEEEEEKEIKPNIR.

The region spanning 24 to 92 (CDCSILVEGK…VYSGKLSLTG (69 aa)) is the BTB domain. Composition is skewed to polar residues over residues 146-170 (ERSS…SPDQ) and 178-197 (KSWS…QQPL). The tract at residues 146 to 252 (ERSSFYSSGW…SEEQAQMNAE (107 aa)) is disordered. Serine 161 and serine 167 each carry phosphoserine. Glycyl lysine isopeptide (Lys-Gly) (interchain with G-Cter in SUMO2) cross-links involve residues lysine 178, lysine 182, and lysine 199. Residues 198–208 (TKHEQRKDSIK) show a composition bias toward basic and acidic residues. Residues 234 to 248 (SDSSSHASQSEEQAQ) are compositionally biased toward low complexity. C2H2-type zinc fingers lie at residues 282–304 (FKCP…LRCH) and 310–333 (YPCQ…RTIH). A Glycyl lysine isopeptide (Lys-Gly) (interchain with G-Cter in SUMO2) cross-link involves residue lysine 437.

The protein localises to the nucleus. In terms of biological role, may be involved in transcriptional regulation. The protein is Zinc finger and BTB domain-containing protein 8A (ZBTB8A) of Bos taurus (Bovine).